Reading from the N-terminus, the 351-residue chain is Probable dual-specificity RNA methyltransferase RlmN (351 aa).

Glu102 functions as the Proton acceptor in the catalytic mechanism. Residues 110–339 (DGGRKTICIS…ILNRRSPGKD (230 aa)) form the Radical SAM core domain. A disulfide bond links Cys117 and Cys344. Residues Cys124, Cys128, and Cys131 each contribute to the [4Fe-4S] cluster site. Residues 171–172 (GE), Ser203, 226–228 (SLN), and Asn302 each bind S-adenosyl-L-methionine. Residue Cys344 is the S-methylcysteine intermediate of the active site.

The protein belongs to the radical SAM superfamily. RlmN family. [4Fe-4S] cluster is required as a cofactor.

The protein resides in the cytoplasm. It carries out the reaction adenosine(2503) in 23S rRNA + 2 reduced [2Fe-2S]-[ferredoxin] + 2 S-adenosyl-L-methionine = 2-methyladenosine(2503) in 23S rRNA + 5'-deoxyadenosine + L-methionine + 2 oxidized [2Fe-2S]-[ferredoxin] + S-adenosyl-L-homocysteine. The enzyme catalyses adenosine(37) in tRNA + 2 reduced [2Fe-2S]-[ferredoxin] + 2 S-adenosyl-L-methionine = 2-methyladenosine(37) in tRNA + 5'-deoxyadenosine + L-methionine + 2 oxidized [2Fe-2S]-[ferredoxin] + S-adenosyl-L-homocysteine. In terms of biological role, specifically methylates position 2 of adenine 2503 in 23S rRNA and position 2 of adenine 37 in tRNAs. The sequence is that of Probable dual-specificity RNA methyltransferase RlmN from Leptospira borgpetersenii serovar Hardjo-bovis (strain JB197).